The sequence spans 217 residues: D-methionine transport system permease protein MetI (217 aa).

The Periplasmic segment spans residues 1 to 19 (MSEPMMWLLVRGVWETLAM). The 192-residue stretch at 13 to 204 (VWETLAMTFV…LLVILVYLIQ (192 aa)) folds into the ABC transmembrane type-1 domain. Residues 20-40 (TFVSGFFGFVIGLPVGVLLYV) traverse the membrane as a helical segment. Topologically, residues 41–57 (TRPGQIIANAKLYRTVS) are cytoplasmic. Residues 58 to 78 (AIVNIFRSIPFIILLVWMIPF) form a helical membrane-spanning segment. Residues 79–80 (TR) lie on the Periplasmic side of the membrane. The chain crosses the membrane as a helical span at residues 81 to 101 (VIVGTSIGLQAAIVPLTVGAA). Residues 102 to 151 (PFIARMVENALLEIPTGLIEASRAMGATPMQIVRKVLLPEALPGLVNAAT) lie on the Cytoplasmic side of the membrane. Residues 152-172 (ITLITLVGYSAMGGAVGAGGL) form a helical membrane-spanning segment. Over 173–185 (GQIGYQYGYIGYN) the chain is Periplasmic. Residues 186–206 (ATVMNTVLVLLVILVYLIQFA) traverse the membrane as a helical segment. The Cytoplasmic segment spans residues 207–217 (GDRIVRAVTRK).

The protein belongs to the binding-protein-dependent transport system permease family. CysTW subfamily.

It is found in the cell inner membrane. Functionally, part of the binding-protein-dependent transport system for D-methionine and the toxic methionine analog alpha-methyl-methionine. Probably responsible for the translocation of the substrate across the membrane. (Microbial infection) Probably transports the toxic C-terminal region of CdiA from E.coli strain MHI813 across the inner membrane to the cytoplasm, where CdiA has a toxic effect. Toxin transport is strain-specific, mutations in this gene do not confer resistance to several other tested CdiA toxins. The polypeptide is D-methionine transport system permease protein MetI (metI) (Escherichia coli (strain K12)).